The chain runs to 612 residues: FAD-linked oxidoreductase easE (612 aa).

The FAD-binding PCMH-type domain occupies 129–313 (HQGRIPLYSA…TRATMRVFPD (185 aa)).

Belongs to the oxygen-dependent FAD-linked oxidoreductase family. The cofactor is FAD.

The protein operates within alkaloid biosynthesis; ergot alkaloid biosynthesis. FAD-linked oxidoreductase; part of the gene cluster that mediates the biosynthesis of fungal ergot alkaloid. DmaW catalyzes the first step of ergot alkaloid biosynthesis by condensing dimethylallyl diphosphate (DMAP) and tryptophan to form 4-dimethylallyl-L-tryptophan. The second step is catalyzed by the methyltransferase easF that methylates 4-dimethylallyl-L-tryptophan in the presence of S-adenosyl-L-methionine, resulting in the formation of 4-dimethylallyl-L-abrine. The catalase easC and the FAD-dependent oxidoreductase easE then transform 4-dimethylallyl-L-abrine to chanoclavine-I which is further oxidized by easD in the presence of NAD(+), resulting in the formation of chanoclavine-I aldehyde. Chanoclavine-I aldehyde is the precursor of ergoamides and ergopeptines in Clavicipitaceae, and clavine-type alcaloids such as fumiclavine in Trichocomaceae. However, the metabolites downstream of chanoclavine-I aldehyde in Arthrodermataceae have not been identified yet. The sequence is that of FAD-linked oxidoreductase easE from Arthroderma otae (strain ATCC MYA-4605 / CBS 113480) (Microsporum canis).